Reading from the N-terminus, the 313-residue chain is Ornithine carbamoyltransferase (313 aa).

Carbamoyl phosphate-binding positions include 57–60, Q84, R108, and 135–138; these read STRT and HPTQ. Residues N167, D231, and 235–236 each bind L-ornithine; that span reads SM. Carbamoyl phosphate contacts are provided by residues 272-273 and R300; that span reads CL.

Belongs to the aspartate/ornithine carbamoyltransferase superfamily. OTCase family.

The protein resides in the cytoplasm. The enzyme catalyses carbamoyl phosphate + L-ornithine = L-citrulline + phosphate + H(+). The protein operates within amino-acid biosynthesis; L-arginine biosynthesis; L-arginine from L-ornithine and carbamoyl phosphate: step 1/3. Its function is as follows. Reversibly catalyzes the transfer of the carbamoyl group from carbamoyl phosphate (CP) to the N(epsilon) atom of ornithine (ORN) to produce L-citrulline. The protein is Ornithine carbamoyltransferase of Pseudothermotoga lettingae (strain ATCC BAA-301 / DSM 14385 / NBRC 107922 / TMO) (Thermotoga lettingae).